An 83-amino-acid polypeptide reads, in one-letter code: Small ribosomal subunit protein bS16 (83 aa).

It belongs to the bacterial ribosomal protein bS16 family.

The protein is Small ribosomal subunit protein bS16 of Azoarcus sp. (strain BH72).